A 641-amino-acid chain; its full sequence is 1-deoxy-D-xylulose-5-phosphate synthase (641 aa).

Thiamine diphosphate is bound by residues His-71 and 112–114 (SHA). Mg(2+) is bound at residue Asp-144. Residues 145-146 (GA), Asn-174, Tyr-285, and Glu-366 contribute to the thiamine diphosphate site. Asn-174 is a binding site for Mg(2+).

Belongs to the transketolase family. DXPS subfamily. In terms of assembly, homodimer. It depends on Mg(2+) as a cofactor. Thiamine diphosphate serves as cofactor.

It catalyses the reaction D-glyceraldehyde 3-phosphate + pyruvate + H(+) = 1-deoxy-D-xylulose 5-phosphate + CO2. The protein operates within metabolic intermediate biosynthesis; 1-deoxy-D-xylulose 5-phosphate biosynthesis; 1-deoxy-D-xylulose 5-phosphate from D-glyceraldehyde 3-phosphate and pyruvate: step 1/1. Its function is as follows. Catalyzes the acyloin condensation reaction between C atoms 2 and 3 of pyruvate and glyceraldehyde 3-phosphate to yield 1-deoxy-D-xylulose-5-phosphate (DXP). This is 1-deoxy-D-xylulose-5-phosphate synthase from Mycobacteroides abscessus (strain ATCC 19977 / DSM 44196 / CCUG 20993 / CIP 104536 / JCM 13569 / NCTC 13031 / TMC 1543 / L948) (Mycobacterium abscessus).